The primary structure comprises 392 residues: Galactokinase (392 aa).

Residues Arg37, Glu43, His44, and Asp46 each contribute to the alpha-D-galactose site. The ATP site is built by Gly136, Gly138, Ser140, and Ser141. Residue Asp186 coordinates alpha-D-galactose. The active-site Proton acceptor is Asp186. The residue at position 230 (Ser230) is a Phosphoserine. Tyr236 is an alpha-D-galactose binding site.

This sequence belongs to the GHMP kinase family. GalK subfamily. In terms of assembly, homodimer.

The enzyme catalyses alpha-D-galactose + ATP = alpha-D-galactose 1-phosphate + ADP + H(+). The protein operates within carbohydrate metabolism; galactose metabolism. Functionally, catalyzes the transfer of a phosphate from ATP to alpha-D-galactose and participates in the first committed step in the catabolism of galactose. This Bos taurus (Bovine) protein is Galactokinase (GALK1).